Here is a 184-residue protein sequence, read N- to C-terminus: MLNDIKNNAQTRMAKSIDALKHTLTSIRTGRATPALLDRVTVNAYGNASTPLNQVASISNADAHSLLVTPFDKSMIKEIEKGLYNAEFTPNTLGTAIRINMPPPTEERRKELAKQVQKEGEGAKIAIRNIRQDANKEIAKLDKDKAISEDEKKRGEDDIQKLTDANIKDVDKVVADKEKELLSV.

This sequence belongs to the RRF family.

The protein resides in the cytoplasm. Responsible for the release of ribosomes from messenger RNA at the termination of protein biosynthesis. May increase the efficiency of translation by recycling ribosomes from one round of translation to another. In Stenotrophomonas maltophilia (strain R551-3), this protein is Ribosome-recycling factor.